The chain runs to 153 residues: Interleukin-4 (153 aa).

Residues 1 to 24 (MGLTSQLLPPLFFLLACAGNFAHG) form the signal peptide. Cystine bridges form between Cys-27-Cys-151, Cys-48-Cys-89, and Cys-70-Cys-123. An N-linked (GlcNAc...) asparagine glycan is attached at Asn-62. Asn-129 carries an N-linked (GlcNAc...) asparagine glycan.

The protein belongs to the IL-4/IL-13 family.

The protein resides in the secreted. In terms of biological role, participates in at least several B-cell activation processes as well as of other cell types. It is a costimulator of DNA-synthesis. It induces the expression of class II MHC molecules on resting B-cells. It enhances both secretion and cell surface expression of IgE and IgG1. It also regulates the expression of the low affinity Fc receptor for IgE (CD23) on both lymphocytes and monocytes. Positively regulates IL31RA expression in macrophages. Stimulates autophagy in dendritic cells by interfering with mTORC1 signaling and through the induction of RUFY4. The polypeptide is Interleukin-4 (IL4) (Macaca mulatta (Rhesus macaque)).